The following is a 35-amino-acid chain: Cupiennin-2d (35 aa).

Glutamine 35 bears the Glutamine amide mark.

As to expression, expressed by the venom gland.

It is found in the secreted. This Cupiennius salei (American wandering spider) protein is Cupiennin-2d.